Reading from the N-terminus, the 130-residue chain is Holo-[acyl-carrier-protein] synthase (130 aa).

Mg(2+) contacts are provided by D9 and E58.

It belongs to the P-Pant transferase superfamily. AcpS family. It depends on Mg(2+) as a cofactor.

The protein resides in the cytoplasm. It catalyses the reaction apo-[ACP] + CoA = holo-[ACP] + adenosine 3',5'-bisphosphate + H(+). Transfers the 4'-phosphopantetheine moiety from coenzyme A to a Ser of acyl-carrier-protein. The polypeptide is Holo-[acyl-carrier-protein] synthase (Mycobacterium sp. (strain JLS)).